The sequence spans 353 residues: Photosystem II D2 protein (353 aa).

Threonine 2 carries the N-acetylthreonine modification. Threonine 2 carries the post-translational modification Phosphothreonine. A helical transmembrane segment spans residues 41 to 61 (CAYFALGGWFTGTTFVTSWYT). Histidine 118 contacts chlorophyll a. The helical transmembrane segment at 125–141 (GFMLRQFELARSVQLRP) threads the bilayer. The pheophytin a site is built by glutamine 130 and asparagine 143. Residues 153–166 (VFVSVFLIYPLGQS) form a helical membrane-spanning segment. Histidine 198 is a chlorophyll a binding site. The chain crosses the membrane as a helical span at residues 208–228 (AALLCAIHGATVENTLFEDGD). A plastoquinone-binding residues include histidine 215 and phenylalanine 262. Histidine 215 lines the Fe cation pocket. Residue histidine 269 participates in Fe cation binding. The chain crosses the membrane as a helical span at residues 279-295 (GLWMSALGVVGLALNLR).

It belongs to the reaction center PufL/M/PsbA/D family. In terms of assembly, PSII is composed of 1 copy each of membrane proteins PsbA, PsbB, PsbC, PsbD, PsbE, PsbF, PsbH, PsbI, PsbJ, PsbK, PsbL, PsbM, PsbT, PsbX, PsbY, PsbZ, Psb30/Ycf12, at least 3 peripheral proteins of the oxygen-evolving complex and a large number of cofactors. It forms dimeric complexes. The D1/D2 heterodimer binds P680, chlorophylls that are the primary electron donor of PSII, and subsequent electron acceptors. It shares a non-heme iron and each subunit binds pheophytin, quinone, additional chlorophylls, carotenoids and lipids. There is also a Cl(-1) ion associated with D1 and D2, which is required for oxygen evolution. The PSII complex binds additional chlorophylls, carotenoids and specific lipids. serves as cofactor.

The protein localises to the plastid. It localises to the chloroplast thylakoid membrane. It carries out the reaction 2 a plastoquinone + 4 hnu + 2 H2O = 2 a plastoquinol + O2. Functionally, photosystem II (PSII) is a light-driven water:plastoquinone oxidoreductase that uses light energy to abstract electrons from H(2)O, generating O(2) and a proton gradient subsequently used for ATP formation. It consists of a core antenna complex that captures photons, and an electron transfer chain that converts photonic excitation into a charge separation. The D1/D2 (PsbA/PsbD) reaction center heterodimer binds P680, the primary electron donor of PSII as well as several subsequent electron acceptors. D2 is needed for assembly of a stable PSII complex. The sequence is that of Photosystem II D2 protein from Populus trichocarpa (Western balsam poplar).